A 90-amino-acid chain; its full sequence is Trp-8 progonadoliberin (90 aa).

An N-terminal signal peptide occupies residues 1–24; that stretch reads MSRHVTVVLLLAVVLLLSSHMSHG. A Pyrrolidone carboxylic acid modification is found at Gln25. Gly34 carries the glycine amide modification.

The protein belongs to the GnRH family. In terms of tissue distribution, expressed in forebrain but not in testis, ovary, kidney and liver.

It localises to the secreted. Stimulates the secretion of gonadotropins. This chain is Trp-8 progonadoliberin, found in Rana dybowskii (Dybovsky's frog).